Consider the following 117-residue polypeptide: Large ribosomal subunit protein uL18 (117 aa).

The protein belongs to the universal ribosomal protein uL18 family. As to quaternary structure, part of the 50S ribosomal subunit; part of the 5S rRNA/L5/L18/L25 subcomplex. Contacts the 5S and 23S rRNAs.

Functionally, this is one of the proteins that bind and probably mediate the attachment of the 5S RNA into the large ribosomal subunit, where it forms part of the central protuberance. In Leuconostoc mesenteroides subsp. mesenteroides (strain ATCC 8293 / DSM 20343 / BCRC 11652 / CCM 1803 / JCM 6124 / NCDO 523 / NBRC 100496 / NCIMB 8023 / NCTC 12954 / NRRL B-1118 / 37Y), this protein is Large ribosomal subunit protein uL18.